The primary structure comprises 169 residues: MFNTRLAIFLLLIVVSLSQAKESQPFDFFEGTYDDFIDCLRINNITIEEYEKFDDTDNLDNVLKENVELKHKCNIKCQLEREPTKWLNARGEVDLKSMKATSETAVSISKCMEKAPQETCAYVYKLVICAFKSGHSVIKFDSYEQIQEETAGLIAEQQADLFDYDTIDL.

A signal peptide spans 1–20; that stretch reads MFNTRLAIFLLLIVVSLSQA. 3 cysteine pairs are disulfide-bonded: C39–C77, C73–C120, and C111–C129.

This sequence belongs to the PBP/GOBP family.

Present in the aqueous fluid surrounding olfactory sensory dendrites and are thought to aid in the capture and transport of hydrophobic odorants into and through this fluid. The polypeptide is General odorant-binding protein 57a (Drosophila melanogaster (Fruit fly)).